The primary structure comprises 892 residues: Alpha-actinin-1 (892 aa).

An N-acetylmethionine modification is found at methionine 1. The tract at residues 1-247 is actin-binding; it reads MDHYDSQQTN…IMTYVSSFYH (247 aa). Serine 6 carries the post-translational modification Phosphoserine. At tyrosine 12 the chain carries Phosphotyrosine; by FAK1. Calponin-homology (CH) domains follow at residues 31–135 and 144–250; these read KQQR…LRFA and TSAK…HAFS. Residues lysine 95 and lysine 195 each carry the N6-acetyllysine modification. Spectrin repeat units follow at residues 274–384, 394–499, 509–620, and 630–733; these read QLME…WLLN, HLAE…ALER, QLYL…ALTE, and RLRK…EVEN. An interaction with DDN region spans residues 274–733; sequence QLMEDYEKLA…IARTINEVEN (460 aa). The residue at position 471 (serine 471) is a Phosphoserine. Lysine 676 bears the N6-acetyllysine mark. Residue serine 677 is modified to Phosphoserine. 2 consecutive EF-hand domains span residues 746-781 and 787-822; these read EQMN…LGYD and QGEA…ETAD. Ca(2+) is bound by residues aspartate 759, aspartate 761, serine 763, threonine 765, and glutamate 770. The residue at position 890 (serine 890) is a Phosphoserine.

Belongs to the alpha-actinin family. In terms of assembly, homodimer; antiparallel. Interacts with MYOZ2, TTID and LPP. Interacts with DDN. Interacts with PSD. Interacts with MICALL2. Interacts with DNM2 and CTTN. Interacts with PDLIM1. Interacts with PDLIM2. Interacts with PDLIM4 (via PDZ domain). Interacts with IGSF8.

It is found in the cytoplasm. The protein resides in the cytoskeleton. Its subcellular location is the myofibril. The protein localises to the sarcomere. It localises to the z line. It is found in the cell membrane. The protein resides in the cell junction. Its subcellular location is the cell projection. The protein localises to the ruffle. Functionally, F-actin cross-linking protein which is thought to anchor actin to a variety of intracellular structures. Association with IGSF8 regulates the immune synapse formation and is required for efficient T-cell activation. This is Alpha-actinin-1 (ACTN1) from Homo sapiens (Human).